We begin with the raw amino-acid sequence, 445 residues long: UPF0210 protein SP_0239 (445 aa).

This sequence belongs to the UPF0210 family. Homodimer.

The protein is UPF0210 protein SP_0239 of Streptococcus pneumoniae serotype 4 (strain ATCC BAA-334 / TIGR4).